We begin with the raw amino-acid sequence, 161 residues long: Protein-export protein SecB (161 aa).

It belongs to the SecB family. Homotetramer, a dimer of dimers. One homotetramer interacts with 1 SecA dimer.

It localises to the cytoplasm. One of the proteins required for the normal export of preproteins out of the cell cytoplasm. It is a molecular chaperone that binds to a subset of precursor proteins, maintaining them in a translocation-competent state. It also specifically binds to its receptor SecA. This chain is Protein-export protein SecB, found in Pseudomonas putida (strain ATCC 700007 / DSM 6899 / JCM 31910 / BCRC 17059 / LMG 24140 / F1).